Consider the following 602-residue polypeptide: MYASKRRQRNFKRVRDPPKQLTNTNPSKRHRERLNGELETVAMLLPYDSSTISRLDKLSVLRLAVSFLQCKAHFQACLHNSQFLSAGFPMSTHSYSYQPHPPIPFSNKVPTIFDLRIGTPMLDPEESNFEEISLKSLGGFILVLNDNGEIYYASENVENYLGFHQSDVLHQPVYDLIHSEDRDDIRQQLDSNFHIPTSSASNQFDVFAPQNSKYLERNVNARFRCLLDNTCGFLRIDMRGKLMSLHGLPSSYVMGRTASGPVLGMICVCTPFVPPSTSDLASEDMILKTKHQLDGALVSMDQKVYEMLEIDETDLPMPLYNLVHVEDAVCMAEAHKEAIKNGSSGLLVYRLVSTKTRRTYFVQSSCRMFYKNSKPESIGLTHRLLNEVEGTMLLEKRSTLKAKLLSFDDSFLQSPRNLQSTAALPLPSVLKDDQDCLEPSTSNSLFPSVPVPTPTTTKANRRRKENSHEIVPTIPSIPIPTHFDMQMFDPSWNHGVHPPAWPHDVYHLTQYPPTYPHPPGTVGYPDVQIAPVDYPGWHPNDIHMTQLPHGFTPDAQKLVPPHPQMSHFTEYPTPSTHHDLHHHPLKQDNFHLISEVTNLLGT.

Residues 1–2 (MY) constitute a propeptide that is removed on maturation. Positions 1–12 (MYASKRRQRNFK) are enriched in basic residues. The tract at residues 1–28 (MYASKRRQRNFKRVRDPPKQLTNTNPSK) is disordered. 2 short sequence motifs (nuclear localization signal) span residues 5 to 8 (KRRQ) and 28 to 33 (KRHRER). One can recognise a bHLH domain in the interval 18–71 (PKQLTNTNPSKRHRERLNGELETVAMLLPYDSSTISRLDKLSVLRLAVSFLQCK). 3 required for maintaining the overall integrity of the AHR:ARNT heterodimer and its transcriptional activity regions span residues 41-73 (VAMLLPYDSSTISRLDKLSVLRLAVSFLQCKAH), 133-141 (SLKSLGGFI), and 266-268 (ICV). The Nuclear export signal signature appears at 55-63 (LDKLSVLRL). Residues 126-196 (ESNFEEISLK…QQLDSNFHIP (71 aa)) enclose the PAS domain. The tract at residues 440–467 (STSNSLFPSVPVPTPTTTKANRRRKENS) is disordered.

As to quaternary structure, interacts with daf-21/hsp90. Interacts with aha-1. Expressed in many distinct neuronal cells including RMED, RMEV, RMEL and RMER. Functions in URX neurons to promote aggregation behavior.

Its subcellular location is the nucleus. Functionally, probable ligand-activated transcriptional activator. Acts as a transcriptional regulator in GABAergic motor neuron cell fate specification and development. Promotes cell-type-specific expression of guanylate cyclase genes that have key roles in aggregation behavior and hyperoxia avoidance. Has no role in carbon dioxide avoidance. This chain is Aryl hydrocarbon receptor protein 1, found in Caenorhabditis elegans.